The primary structure comprises 402 residues: Putative F-box/kelch-repeat protein At1g61540 (402 aa).

Positions 24–70 constitute an F-box domain; the sequence is PISIMSLPYDLLLNCFSLVSRLYYPTLSLVSKTFRSIITSRELYEIR. 3 Kelch repeats span residues 135-189, 191-240, and 246-293; these read NIYK…CEVD, KIYI…EVKS, and KIYM…VVDN.

The chain is Putative F-box/kelch-repeat protein At1g61540 from Arabidopsis thaliana (Mouse-ear cress).